The following is a 196-amino-acid chain: ATP-dependent Clp protease proteolytic subunit (196 aa).

The Nucleophile role is filled by Ser-98. Residue His-123 is part of the active site.

It belongs to the peptidase S14 family. Fourteen ClpP subunits assemble into 2 heptameric rings which stack back to back to give a disk-like structure with a central cavity, resembling the structure of eukaryotic proteasomes.

It localises to the cytoplasm. It catalyses the reaction Hydrolysis of proteins to small peptides in the presence of ATP and magnesium. alpha-casein is the usual test substrate. In the absence of ATP, only oligopeptides shorter than five residues are hydrolyzed (such as succinyl-Leu-Tyr-|-NHMec, and Leu-Tyr-Leu-|-Tyr-Trp, in which cleavage of the -Tyr-|-Leu- and -Tyr-|-Trp bonds also occurs).. In terms of biological role, cleaves peptides in various proteins in a process that requires ATP hydrolysis. Has a chymotrypsin-like activity. Plays a major role in the degradation of misfolded proteins. ClpXP is involved in the complete degradation of the Site-2 clipped anti-sigma-W factor RsiW. This results in the release of SigW and the transcription activation of the genes under the control of the sigma-W factor. The protein is ATP-dependent Clp protease proteolytic subunit of Geobacillus kaustophilus (strain HTA426).